The following is a 308-amino-acid chain: Elongation factor Ts (308 aa).

Residues 80–83 are involved in Mg(2+) ion dislocation from EF-Tu; that stretch reads TDFV.

Belongs to the EF-Ts family.

It is found in the cytoplasm. In terms of biological role, associates with the EF-Tu.GDP complex and induces the exchange of GDP to GTP. It remains bound to the aminoacyl-tRNA.EF-Tu.GTP complex up to the GTP hydrolysis stage on the ribosome. The protein is Elongation factor Ts of Rhodopseudomonas palustris (strain BisB5).